We begin with the raw amino-acid sequence, 234 residues long: Leucyl/phenylalanyl-tRNA--protein transferase (234 aa).

This sequence belongs to the L/F-transferase family.

Its subcellular location is the cytoplasm. The enzyme catalyses N-terminal L-lysyl-[protein] + L-leucyl-tRNA(Leu) = N-terminal L-leucyl-L-lysyl-[protein] + tRNA(Leu) + H(+). The catalysed reaction is N-terminal L-arginyl-[protein] + L-leucyl-tRNA(Leu) = N-terminal L-leucyl-L-arginyl-[protein] + tRNA(Leu) + H(+). It carries out the reaction L-phenylalanyl-tRNA(Phe) + an N-terminal L-alpha-aminoacyl-[protein] = an N-terminal L-phenylalanyl-L-alpha-aminoacyl-[protein] + tRNA(Phe). Its function is as follows. Functions in the N-end rule pathway of protein degradation where it conjugates Leu, Phe and, less efficiently, Met from aminoacyl-tRNAs to the N-termini of proteins containing an N-terminal arginine or lysine. The protein is Leucyl/phenylalanyl-tRNA--protein transferase of Salmonella gallinarum (strain 287/91 / NCTC 13346).